The sequence spans 212 residues: Thymidylate kinase (212 aa).

Residue 10–17 (GLEGAGKT) coordinates ATP.

This sequence belongs to the thymidylate kinase family.

It carries out the reaction dTMP + ATP = dTDP + ADP. In terms of biological role, phosphorylation of dTMP to form dTDP in both de novo and salvage pathways of dTTP synthesis. In Yersinia pseudotuberculosis serotype O:3 (strain YPIII), this protein is Thymidylate kinase.